The following is a 318-amino-acid chain: 4-diphosphocytidyl-2-C-methyl-D-erythritol kinase (318 aa).

Lys-25 is a catalytic residue. 110–120 (PVAGGMAGGSA) contacts ATP. Asp-152 is a catalytic residue.

This sequence belongs to the GHMP kinase family. IspE subfamily.

The catalysed reaction is 4-CDP-2-C-methyl-D-erythritol + ATP = 4-CDP-2-C-methyl-D-erythritol 2-phosphate + ADP + H(+). It participates in isoprenoid biosynthesis; isopentenyl diphosphate biosynthesis via DXP pathway; isopentenyl diphosphate from 1-deoxy-D-xylulose 5-phosphate: step 3/6. Functionally, catalyzes the phosphorylation of the position 2 hydroxy group of 4-diphosphocytidyl-2C-methyl-D-erythritol. The polypeptide is 4-diphosphocytidyl-2-C-methyl-D-erythritol kinase (Mycobacterium tuberculosis (strain ATCC 25177 / H37Ra)).